We begin with the raw amino-acid sequence, 1123 residues long: Phytochrome 1 (1123 aa).

A compositionally biased stretch (low complexity) spans Met1–Lys15. Residues Met1–Ser20 form a disordered region. In terms of domain architecture, GAF spans Asp216–Val395. Cys321 contributes to the phytochromobilin binding site. 2 consecutive PAS domains span residues Val610–Glu681 and Asp744–Met815. Residues Tyr895–Gln1115 form the Histidine kinase domain.

Belongs to the phytochrome family. Homodimer. Post-translationally, contains one covalently linked phytochromobilin chromophore.

Its subcellular location is the cytoplasm. In terms of biological role, regulatory photoreceptor which exists in two forms that are reversibly interconvertible by light: the Pr form that absorbs maximally in the red region of the spectrum and the Pfr form that absorbs maximally in the far-red region. Photoconversion of Pr to Pfr induces an array of morphogenetic responses, whereas reconversion of Pfr to Pr cancels the induction of those responses. Pfr controls the expression of a number of nuclear genes including those encoding the small subunit of ribulose-bisphosphate carboxylase, chlorophyll A/B binding protein, protochlorophyllide reductase, rRNA, etc. It also controls the expression of its own gene(s) in a negative feedback fashion. Mediates chloroplast avoidance movement in cytoplasm. The sequence is that of Phytochrome 1 (PHY1) from Physcomitrium patens (Spreading-leaved earth moss).